Consider the following 860-residue polypeptide: Glucans biosynthesis glucosyltransferase H (860 aa).

6 consecutive transmembrane segments (helical) span residues 146–166, 200–220, 519–539, 576–596, 610–630, and 686–706; these read ILLI…KGIL, ILLL…TALM, VFLT…FLVL, LFST…ILIW, TVSM…RMLF, and FLWW…VSVI.

This sequence belongs to the glycosyltransferase 2 family. OpgH subfamily.

It is found in the cell inner membrane. Its pathway is glycan metabolism; osmoregulated periplasmic glucan (OPG) biosynthesis. Functionally, involved in the biosynthesis of osmoregulated periplasmic glucans (OPGs). This Pseudomonas savastanoi pv. phaseolicola (strain 1448A / Race 6) (Pseudomonas syringae pv. phaseolicola (strain 1448A / Race 6)) protein is Glucans biosynthesis glucosyltransferase H.